The following is a 134-amino-acid chain: UPF0412 protein YaaI (134 aa).

Positions 1-23 (MKSVFTISASLAISLMLCCTAQA) are cleaved as a signal peptide.

It belongs to the UPF0412 family.

The protein is UPF0412 protein YaaI of Shigella dysenteriae serotype 1 (strain Sd197).